We begin with the raw amino-acid sequence, 393 residues long: Cytotoxic and regulatory T-cell molecule (393 aa).

The N-terminal stretch at 1–17 (MWWRVLSLLAWFPLQEA) is a signal peptide. The Ig-like V-type domain maps to 18 to 114 (SLTNHTETIT…VSTKEVKVIV (97 aa)). Over 18 to 287 (SLTNHTETIT…YLGLARKKSG (270 aa)) the chain is Extracellular. N-linked (GlcNAc...) asparagine glycans are attached at residues asparagine 21, asparagine 87, and asparagine 178. 2 disulfide bridges follow: cysteine 38/cysteine 98 and cysteine 141/cysteine 196. In terms of domain architecture, Ig-like C2-type spans 118–210 (PFKPILEASV…RGLQGRKLVA (93 aa)). Positions 225–273 (SDALERNSLSSQDPQQPTSTVSVTEDSSTSEIDKEEKEQTTQDPDLTTE) are disordered. Over residues 231–241 (NSLSSQDPQQP) the composition is skewed to polar residues. The span at 242 to 254 (TSTVSVTEDSSTS) shows a compositional bias: low complexity. A compositionally biased stretch (basic and acidic residues) spans 255–264 (EIDKEEKEQT). The chain crosses the membrane as a helical span at residues 288-308 (ILLLTLVSFLIFILFIIVQLF). At 309-393 (IMKLRKAHVI…KHIQVPESIV (85 aa)) the chain is on the cytoplasmic side. Composition is skewed to basic and acidic residues over residues 328–348 (HTLESYRSRSNNEETSSEEKN) and 374–387 (ENVQHSKLEEKHIQ). Disordered stretches follow at residues 328–354 (HTLESYRSRSNNEETSSEEKNGQSSHP) and 374–393 (ENVQHSKLEEKHIQVPESIV). The short motif at 390–393 (ESIV) is the PDZ-binding element.

Belongs to the nectin family. Monomer. May form homodimer (via Ig-like V-type domain). Interacts (via Ig-like V-type domain) with CADM1 (via Ig-like V-type domain); the interaction competes with CRTAM homodimerization and CADM1 homodimerization. Interacts (via PDZ-binding motif) with SCRIB (via PDZ domain 3); the interaction promotes CRTAM and SCRIB polarization in a subset of CD4+ T-cells. In terms of tissue distribution, in the immune system, expression is restricted to activated class-I MHC-restricted cells, including NKT and CD8 T-cells. Strongly expressed in spleen, thymus, small intestine, peripheral blood leukocyte, and in Purkinje neurons in cerebellum. Expressed at much lower levels in testis, ovary, colon, lung and lymphoid tissues.

It is found in the cell membrane. Its function is as follows. Mediates heterophilic cell-cell adhesion which regulates the activation, differentiation and tissue retention of various T-cell subsets. Interaction with CADM1 promotes natural killer (NK) cell cytotoxicity and IFNG/interferon-gamma secretion by CD8+ T-cells in vitro as well as NK cell-mediated rejection of tumors expressing CADM1 in vivo. Regulates CD8+ T-cell proliferation in response to T-cell receptor (TCR) activation. Appears to be dispensable for CD8+ T-cell-mediated cytotoxicity. Interaction with SCRIB promotes the late phase of cellular polarization of a subset of CD4+ T-cells, which in turn regulates TCR-mediated proliferation and IFNG, IL17 and IL22 production. By interacting with CADM1 on CD8+ dendritic cells, regulates the retention of activated CD8+ T-cells within the draining lymph node. Required for the intestinal retention of intraepithelial CD4+ CD8+ T-cells and, to a lesser extent, intraepithelial and lamina propria CD8+ T-cells and CD4+ T-cells. Interaction with CADM1 promotes the adhesion to gut-associated CD103+ dendritic cells, which may facilitate the expression of gut-homing and adhesion molecules on T-cells and the conversion of CD4+ T-cells into CD4+ CD8+ T-cells. This chain is Cytotoxic and regulatory T-cell molecule, found in Homo sapiens (Human).